Here is a 377-residue protein sequence, read N- to C-terminus: Prostaglandin E synthase 2 (377 aa).

The Lumenal portion of the chain corresponds to 1–57 (MDPAARVVRALWPGGCALAWRLGGRPQPLLPTQSRAGFAGAAGGPSPVAAARKGSPR). The chain crosses the membrane as a helical span at residues 58–74 (LLGAAALALGGALGLYH). Over 75–377 (TARWHLRAQD…RAITEASPAH (303 aa)) the chain is Cytoplasmic. The Glutaredoxin domain maps to 90–193 (SAAQLSLSSR…EIITYYPAMK (104 aa)). Serine 95 bears the Phosphoserine mark. Residues valine 148 and 164–165 (DS) contribute to the glutathione site. A GST C-terminal domain is found at 263-377 (YIVREGKFGA…RAITEASPAH (115 aa)).

The protein belongs to the GST superfamily. In terms of assembly, homodimer. May interact with CEBPB. Interacts with EXOSC10. Synthesized as a Golgi membrane-associated protein, and the proteolytic removal of the N-terminal hydrophobic domain leads to the formation of a mature cytosolic enzyme. Widely expressed. Expressed in the heart, including apex, inter-ventricular septum, both atria and ventricles, but not in the aorta. Also expressed in fetal heart. Detected in various regions of the brain: cerebellum; occipital, frontal and parietal lobes. Also expressed in the lymph nodes, skeletal muscle, kidney and trachea, but not in the thymus or lung. Overexpressed in colorectal cancer.

It is found in the golgi apparatus membrane. The protein resides in the cytoplasm. It localises to the perinuclear region. The catalysed reaction is prostaglandin H2 = prostaglandin E2. The enzyme catalyses prostaglandin H2 = (12S)-hydroxy-(5Z,8E,10E)-heptadecatrienoate + malonaldehyde. It participates in lipid metabolism; prostaglandin biosynthesis. With respect to regulation, isomerase activity is increased by sulfhydril compounds. Dithiothreitol (DTT) is most effective, followed by dihydrolipoic acid, glutathione (GSH) and 2-mercaptoethanol. In terms of biological role, isomerase that catalyzes the conversion of PGH2 into the more stable prostaglandin E2 (PGE2) (in vitro). The biological function and the GSH-dependent property of PTGES2 is still under debate. In vivo, PTGES2 could form a complex with GSH and heme and would not participate in PGE2 synthesis but would catalyze the degradation of prostaglandin E2 H2 (PGH2) to 12(S)-hydroxy-5(Z),8(E),10(E)-heptadecatrienoic acid (HHT) and malondialdehyde (MDA). This Homo sapiens (Human) protein is Prostaglandin E synthase 2 (PTGES2).